The sequence spans 50 residues: Large ribosomal subunit protein bL33 (50 aa).

It belongs to the bacterial ribosomal protein bL33 family.

In Sulfurovum sp. (strain NBC37-1), this protein is Large ribosomal subunit protein bL33.